A 36-amino-acid chain; its full sequence is U4-ctenitoxin-Pr1a (36 aa).

3 disulfides stabilise this stretch: Cys-3/Cys-17, Cys-10/Cys-22, and Cys-16/Cys-34.

As to expression, expressed by the venom gland.

The protein resides in the secreted. Neurotoxin. Causes spastic paralysis and death in mice. Moderate inhibitor of L-type calcium channels (Cav1/CACNA1). This is U4-ctenitoxin-Pr1a from Phoneutria reidyi (Brazilian Amazonian armed spider).